A 108-amino-acid chain; its full sequence is Class I hydrophobin 3 (108 aa).

Residues 1 to 17 (MFFQTTIVAALASLAVA) form the signal peptide. Cystine bridges form between cysteine 28/cysteine 87, cysteine 35/cysteine 81, cysteine 36/cysteine 69, and cysteine 88/cysteine 101. An N-linked (GlcNAc...) asparagine glycan is attached at asparagine 37.

This sequence belongs to the fungal hydrophobin family. In terms of assembly, self-assembles to form functional amyloid fibrils called rodlets. Self-assembly into fibrillar rodlets occurs spontaneously at hydrophobic:hydrophilic interfaces and the rodlets further associate laterally to form amphipathic monolayers.

Its subcellular location is the secreted. The protein localises to the cell wall. Functionally, aerial growth, conidiation, and dispersal of filamentous fungi in the environment rely upon a capability of their secreting small amphipathic proteins called hydrophobins (HPBs) with low sequence identity. Class I can self-assemble into an outermost layer of rodlet bundles on aerial cell surfaces, conferring cellular hydrophobicity that supports fungal growth, development and dispersal; whereas Class II form highly ordered films at water-air interfaces through intermolecular interactions but contribute nothing to the rodlet structure. Vmh3 is a class I hydrophobin that is essential for the maintenance of the surface hydrophobicity of the mycelium and might be involved in the development of fruiting bodies. Plays an important role in hyphal resistance against environmental stress. Necessary for the efficient biodegradation of lignin. This Pleurotus ostreatus (strain PC15) (Oyster mushroom) protein is Class I hydrophobin 3.